Consider the following 974-residue polypeptide: UvrABC system protein A (974 aa).

34-41 provides a ligand contact to ATP; it reads GLSGSGKS. ABC transporter domains lie at 331 to 610 and 630 to 959; these read WARS…TNSL and ISKT…QFLK. ATP is bound at residue 663 to 670; sequence GVSGGGKS. A C4-type zinc finger spans residues 762–788; the sequence is CEACQGDGVIKIEMHFLPDVYVTCDVC.

The protein belongs to the ABC transporter superfamily. UvrA family. Forms a heterotetramer with UvrB during the search for lesions.

The protein localises to the cytoplasm. Functionally, the UvrABC repair system catalyzes the recognition and processing of DNA lesions. UvrA is an ATPase and a DNA-binding protein. A damage recognition complex composed of 2 UvrA and 2 UvrB subunits scans DNA for abnormalities. When the presence of a lesion has been verified by UvrB, the UvrA molecules dissociate. This chain is UvrABC system protein A, found in Brucella abortus (strain 2308).